The chain runs to 156 residues: Small ribosomal subunit protein uS7 (156 aa).

The protein belongs to the universal ribosomal protein uS7 family. In terms of assembly, part of the 30S ribosomal subunit. Contacts proteins S9 and S11.

In terms of biological role, one of the primary rRNA binding proteins, it binds directly to 16S rRNA where it nucleates assembly of the head domain of the 30S subunit. Is located at the subunit interface close to the decoding center, probably blocks exit of the E-site tRNA. This is Small ribosomal subunit protein uS7 from Chlorobaculum parvum (strain DSM 263 / NCIMB 8327) (Chlorobium vibrioforme subsp. thiosulfatophilum).